The sequence spans 528 residues: DEAD-box ATP-dependent RNA helicase CshA (528 aa).

The Q motif motif lies at Thr-2 to Ala-30. Residues Ile-33–Ile-203 enclose the Helicase ATP-binding domain. Ala-46 to Thr-53 is a binding site for ATP. Positions Asp-151–Asp-154 match the DEAD box motif. In terms of domain architecture, Helicase C-terminal spans Asn-214–Ala-374. The segment at Thr-428–Ala-528 is disordered. Residues Asp-458–Gly-506 show a composition bias toward basic and acidic residues. Residues Glu-518–Ala-528 show a composition bias toward basic residues.

The protein belongs to the DEAD box helicase family. CshA subfamily. In terms of assembly, oligomerizes, may be a member of the RNA degradosome.

The protein localises to the cytoplasm. It carries out the reaction ATP + H2O = ADP + phosphate + H(+). DEAD-box RNA helicase possibly involved in RNA degradation. Unwinds dsRNA in both 5'- and 3'-directions, has RNA-dependent ATPase activity. In Bacillus thuringiensis (strain Al Hakam), this protein is DEAD-box ATP-dependent RNA helicase CshA.